Reading from the N-terminus, the 196-residue chain is Peptide deformylase (196 aa).

2 residues coordinate Fe cation: cysteine 105 and histidine 147. Residue glutamate 148 is part of the active site. Histidine 151 is a binding site for Fe cation.

Belongs to the polypeptide deformylase family. The cofactor is Fe(2+).

The catalysed reaction is N-terminal N-formyl-L-methionyl-[peptide] + H2O = N-terminal L-methionyl-[peptide] + formate. Its function is as follows. Removes the formyl group from the N-terminal Met of newly synthesized proteins. Requires at least a dipeptide for an efficient rate of reaction. N-terminal L-methionine is a prerequisite for activity but the enzyme has broad specificity at other positions. The chain is Peptide deformylase from Christiangramia forsetii (strain DSM 17595 / CGMCC 1.15422 / KT0803) (Gramella forsetii).